The chain runs to 284 residues: MQPTLAPAPHPSMQTSAQDHADQVLHDQLLAAHQHLSHPQQPRPQPPAAQPPHMQPNTTSPRDQNNIDPAISGAAMLSGPPQTPPQPEPTGQESPKTYGKRPLSTSKRAAQNRAAQRAFRQRKESYIRKLEEQVKEFDTMSEAFKALQAENYQLREYIINLQSRLLESQGEVPELPGNIDLSQPRTDLNVPQPGAGPATTSSSAPAPPSGAQQAQPPQGAASNDDMNSLNRIAVAGLGMRKHPNEEANYLGNNFTGRRTRPDETQADSEVTKTEQAPHGLPMVS.

Over residues methionine 1–histidine 10 the composition is skewed to pro residues. The segment at methionine 1 to glutamine 121 is disordered. The span at histidine 26–glutamine 40 shows a compositional bias: low complexity. Over residues glutamine 41–methionine 54 the composition is skewed to pro residues. The segment covering asparagine 57–isoleucine 67 has biased composition (polar residues). The 64-residue stretch at proline 102–leucine 165 folds into the bZIP domain. The basic motif stretch occupies residues leucine 103 to tyrosine 126. Low complexity predominate over residues arginine 108–alanine 118. The leucine-zipper stretch occupies residues leucine 130–leucine 161. The segment at glutamate 174–serine 284 is disordered. Low complexity predominate over residues proline 193–serine 222.

This sequence belongs to the bZIP family.

It localises to the nucleus. Putative transcription factor. The protein is Putative transcription factor kapC (kapC) of Aspergillus oryzae (strain ATCC 42149 / RIB 40) (Yellow koji mold).